We begin with the raw amino-acid sequence, 236 residues long: Uridylate kinase (236 aa).

Position 12–15 (12–15) interacts with ATP; sequence KLSG. Residues 20–25 form an involved in allosteric activation by GTP region; the sequence is GEKGFG. Gly54 is a UMP binding site. The ATP site is built by Gly55 and Arg59. UMP-binding positions include Asp72 and 133–140; that span reads TGNPYFST. The ATP site is built by Asn161, Tyr166, and Asp169.

It belongs to the UMP kinase family. In terms of assembly, homohexamer.

It localises to the cytoplasm. It catalyses the reaction UMP + ATP = UDP + ADP. The protein operates within pyrimidine metabolism; CTP biosynthesis via de novo pathway; UDP from UMP (UMPK route): step 1/1. With respect to regulation, allosterically activated by GTP. Inhibited by UTP. Catalyzes the reversible phosphorylation of UMP to UDP. This Alkaliphilus oremlandii (strain OhILAs) (Clostridium oremlandii (strain OhILAs)) protein is Uridylate kinase.